A 282-amino-acid polypeptide reads, in one-letter code: Protein FRG2-like-2 (282 aa).

Residues methionine 1–leucine 10 are compositionally biased toward basic and acidic residues. 2 disordered regions span residues methionine 1 to cysteine 96 and glycine 249 to proline 282. Polar residues-rich tracts occupy residues serine 13–glutamate 31, arginine 58–lysine 68, and glycine 79–glutamate 94.

The protein belongs to the FRG2 family.

The protein localises to the nucleus. The chain is Protein FRG2-like-2 (FRG2C) from Homo sapiens (Human).